The primary structure comprises 513 residues: Noroxomaritidine synthase 1 (513 aa).

Residues 18–34 (ILIAIACLVVFSLLRSA) form a helical membrane-spanning segment. Heme is bound at residue cysteine 458.

Belongs to the cytochrome P450 family. It depends on heme as a cofactor. In terms of tissue distribution, mostly expressed in stems, and, to a lower extent, in bulbs, roots, leaves and flowers.

It is found in the membrane. The enzyme catalyses 4'-O-methylnorbelladine + reduced [NADPH--hemoprotein reductase] + O2 = (10bR,4aS)-noroxomaritidine + oxidized [NADPH--hemoprotein reductase] + 2 H2O + H(+). The catalysed reaction is 4'-O-methylnorbelladine + reduced [NADPH--hemoprotein reductase] + O2 = (10bS,4aR)-noroxomaritidine + oxidized [NADPH--hemoprotein reductase] + 2 H2O + H(+). The protein operates within alkaloid biosynthesis. Its function is as follows. Cytochrome P450 that catalyzes an intramolecular para-para' C-C phenol coupling of 4'-O-methylnorbelladine in alkaloids biosynthesis, including haemanthamine- and crinamine-type alkaloids, promising anticancer agents. Catalyzes the formation of (10bR,4aS)-noroxomaritidine and (10bS,4aR)-noroxomaritidine from 4'-O-methylnorbelladine. This Narcissus pseudonarcissus (Daffodil) protein is Noroxomaritidine synthase 1.